We begin with the raw amino-acid sequence, 369 residues long: MAQTLVVKIGTSSLAGGKEGNLALATIAQLVEVLCHCQRRGDRVVLVSSGAVGVGAMRLGLTERPQQLAQKQAVAAVGQGHLMRMYDDLFAVLRQPIAQILVTRQNFVDRQSYLNIYNTFQALFELGVIPIVNENDTVAVDELKFGDNDTLSALVASLVEADWLFLLTDVDRLYSADPRIDKTAVPIERVVSLAELAQTIQVGSAGSPWGTGGMATKIRAAEIATEAGVRTVITDGRSPTNLLKILGGEALGTHFEPRPKTINARKRWIARALIPKGELWLDEGAVKAITVGGKSLLAAGITRVEGEFQAQDAVKLCDPTGAEIARGLVNYNSEEIRRVQGQQSTELANILGYAGADTIVHRDNLVVTL.

Lys-8 serves as a coordination point for ATP. Substrate-binding residues include Ser-49, Asp-136, and Asn-148. Residues 168-169 (TD) and 211-217 (TGGMATK) each bind ATP. The region spanning 276 to 354 (KGELWLDEGA…TELANILGYA (79 aa)) is the PUA domain.

It belongs to the glutamate 5-kinase family.

It localises to the cytoplasm. It carries out the reaction L-glutamate + ATP = L-glutamyl 5-phosphate + ADP. The protein operates within amino-acid biosynthesis; L-proline biosynthesis; L-glutamate 5-semialdehyde from L-glutamate: step 1/2. In terms of biological role, catalyzes the transfer of a phosphate group to glutamate to form L-glutamate 5-phosphate. The protein is Glutamate 5-kinase of Thermosynechococcus vestitus (strain NIES-2133 / IAM M-273 / BP-1).